Here is a 550-residue protein sequence, read N- to C-terminus: Pectinesterase 2.2 (550 aa).

Residue N179 is glycosylated (N-linked (GlcNAc...) asparagine). Residues T312 and Q342 each contribute to the substrate site. The cysteines at positions 331 and 358 are disulfide-linked. The Proton donor role is filled by D365. D386 serves as the catalytic Nucleophile. A disulfide bridge connects residues C399 and C433. 2 residues coordinate substrate: R454 and W456.

In the N-terminal section; belongs to the PMEI family. It in the C-terminal section; belongs to the pectinesterase family.

It is found in the secreted. It localises to the cell wall. The enzyme catalyses [(1-&gt;4)-alpha-D-galacturonosyl methyl ester](n) + n H2O = [(1-&gt;4)-alpha-D-galacturonosyl](n) + n methanol + n H(+). Its pathway is glycan metabolism; pectin degradation; 2-dehydro-3-deoxy-D-gluconate from pectin: step 1/5. Pectinesterase may play a role in cell wall metabolism during fruit growth and development prior to ripening and may be required for preparing cell walls for softening by polygalacturonase during fruit ripening. The polypeptide is Pectinesterase 2.2 (PME2.2) (Solanum lycopersicum (Tomato)).